A 41-amino-acid chain; its full sequence is Photosystem I reaction center subunit IX (41 aa).

Residues 7–29 form a helical membrane-spanning segment; that stretch reads YLSTAPVLLTVWLSITASGIMII.

Belongs to the PsaJ family.

It is found in the plastid. Its subcellular location is the chloroplast thylakoid membrane. Functionally, may help in the organization of the PsaE and PsaF subunits. The polypeptide is Photosystem I reaction center subunit IX (Heterosigma akashiwo (strain NIES-293 / 8280G21-1)).